The following is a 276-amino-acid chain: Putative olfactory receptor 10J6 (276 aa).

Over 1–25 (MRRKNLTEVTEFVFLGFSRFHKHHI) the chain is Extracellular. N-linked (GlcNAc...) asparagine glycosylation is present at Asn5. The chain crosses the membrane as a helical span at residues 26-46 (TLFVVFLILYTLTVAGNAIIM). At 47–54 (TIICIDRH) the chain is on the cytoplasmic side. The chain crosses the membrane as a helical span at residues 55-75 (LHTPMYFFLSMLASSKTVYTL). Over 76-99 (FIIPQMLSSFVTQTQPISLAGCTT) the chain is Extracellular. Cys97 and Cys188 form a disulfide bridge. A helical transmembrane segment spans residues 100–120 (QTFFFVTLAINNCFLLTVMGY). The Cytoplasmic portion of the chain corresponds to 121–139 (DHYMAICNPLRYRVITSKK). The chain crosses the membrane as a helical span at residues 140–160 (VCVQLVCGAFSIGLAMAAVQV). Over 161 to 196 (TSIFTLPFCHTVVGHFFCDILPVMKLSCINTTINEI) the chain is Extracellular. N-linked (GlcNAc...) asparagine glycosylation occurs at Asn190. The helical transmembrane segment at 197–216 (INFVVRLFVILVPMGLVFIS) threads the bilayer. The Cytoplasmic segment spans residues 217–236 (YVLIISTVLKIASAEGWKKT). Residues 237–257 (FATCAFHLTVVIVHYGCASIA) form a helical membrane-spanning segment. Over 258–270 (YLMPKSENSIEQD) the chain is Extracellular. Residues 271-276 (LLLSVT) form a helical membrane-spanning segment.

The protein belongs to the G-protein coupled receptor 1 family.

The protein resides in the cell membrane. Its function is as follows. Odorant receptor. This chain is Putative olfactory receptor 10J6 (OR10J6P), found in Homo sapiens (Human).